The sequence spans 309 residues: Glutaminase (309 aa).

7 residues coordinate substrate: serine 65, asparagine 117, glutamate 162, asparagine 169, tyrosine 193, tyrosine 245, and valine 263.

Belongs to the glutaminase family. As to quaternary structure, homotetramer.

It catalyses the reaction L-glutamine + H2O = L-glutamate + NH4(+). This is Glutaminase from Bacillus cereus (strain ATCC 10987 / NRS 248).